The primary structure comprises 214 residues: Adenylate kinase (214 aa).

An ATP-binding site is contributed by 10–15 (GAGKGT). Positions 30–59 (STGDMLRAAVKAGTPLGVKAQEIMIQGGLV) are NMP. AMP is bound by residues Thr31, Arg36, 57–59 (GLV), 85–88 (GFPR), and Gln92. The tract at residues 126–163 (GRRSCSSCGKGYHLVFDPPLRAGVCDVCGSGLVQRADD) is LID. An ATP-binding site is contributed by Arg127. 4 residues coordinate Zn(2+): Cys130, Cys133, Cys150, and Cys153. AMP-binding residues include Arg160 and Arg171. Gly199 lines the ATP pocket.

The protein belongs to the adenylate kinase family. As to quaternary structure, monomer.

Its subcellular location is the cytoplasm. It carries out the reaction AMP + ATP = 2 ADP. It functions in the pathway purine metabolism; AMP biosynthesis via salvage pathway; AMP from ADP: step 1/1. In terms of biological role, catalyzes the reversible transfer of the terminal phosphate group between ATP and AMP. Plays an important role in cellular energy homeostasis and in adenine nucleotide metabolism. This chain is Adenylate kinase, found in Trichlorobacter lovleyi (strain ATCC BAA-1151 / DSM 17278 / SZ) (Geobacter lovleyi).